The primary structure comprises 317 residues: Annexin D2 (317 aa).

Ala-2 bears the N-acetylalanine mark. 4 Annexin repeats span residues 11 to 82, 83 to 154, 166 to 238, and 242 to 313; these read PLPE…LWTL, DPPE…PLVS, MLAR…AVIT, and YPEK…ALLG. Ca(2+) is bound by residues Phe-24, Gly-26, Gly-28, and Glu-68. Ser-95 bears the Phosphoserine mark. Phosphothreonine occurs at positions 100 and 112. Phosphotyrosine is present on Tyr-129. 2 residues coordinate Ca(2+): Ile-255 and Gly-259. Position 284 is a phosphotyrosine (Tyr-284). Ser-289 is modified (phosphoserine). Asp-299, Thr-300, and Glu-305 together coordinate Ca(2+).

This sequence belongs to the annexin (TC 1.A.31.1) family. Expressed mainly in roots and flowers. Low in stems and bearly detectable in leaves.

The protein localises to the cytoplasm. It is found in the cytosol. Its subcellular location is the membrane. Functionally, may mediate regulated, targeted secretion of Golgi-derived vesicles during seedling development. This chain is Annexin D2 (ANN2), found in Arabidopsis thaliana (Mouse-ear cress).